The chain runs to 281 residues: MVSYKAFLITLAAVTRVLTYPANSSFELVDRSGTPSSTGTSGGYYYSFWTDGGADVTYTNGAGGEYKLQWSGNGNLVGGKGWNPGSAKAVTYSGTYSPNGNSYLSLYGWTTSPLIEYYVVENFGTYDPSTGATLKGTVVSDGATYKIYQTQRVNQPSIIGTATFYQYWSVRQTKRTGGTVTTGNHFNAWKALGMNMGTFDYMIVATEGYFSSGSSDITVGSSTGGGDSGSPTSAPTTSPTTSPGGTCGALYSQCGGTGFTGSQCCASGTCKYANSYYSQCL.

A signal peptide spans 1-19 (MVSYKAFLITLAAVTRVLT). N-linked (GlcNAc...) asparagine glycosylation is present at Asn-23. The 189-residue stretch at 32 to 220 (SGTPSSTGTS…SSGSSDITVG (189 aa)) folds into the GH11 domain. Glu-116 functions as the Nucleophile in the catalytic mechanism. Residue Glu-207 is the Proton donor of the active site. One can recognise a CBM1 domain in the interval 246-281 (TCGALYSQCGGTGFTGSQCCASGTCKYANSYYSQCL).

It belongs to the glycosyl hydrolase 11 (cellulase G) family.

It carries out the reaction Endohydrolysis of (1-&gt;4)-beta-D-xylosidic linkages in xylans.. The protein operates within glycan degradation; xylan degradation. Endo-1,4-beta-xylanase involved in the hydrolysis of xylan, a major structural heterogeneous polysaccharide found in plant biomass representing the second most abundant polysaccharide in the biosphere, after cellulose. May act as an elicitor of plant defense responses in certain plants but does not exhibit any cell death when transiently expressed in N.benthamiana. The protein is Ethylene-inducing xylanase 1 of Botryotinia fuckeliana (strain B05.10) (Noble rot fungus).